A 503-amino-acid chain; its full sequence is Maturase K (503 aa).

This sequence belongs to the intron maturase 2 family. MatK subfamily.

It is found in the plastid. It localises to the chloroplast. In terms of biological role, usually encoded in the trnK tRNA gene intron. Probably assists in splicing its own and other chloroplast group II introns. This Cercocarpus betuloides (Mountain mahogany) protein is Maturase K.